We begin with the raw amino-acid sequence, 115 residues long: Holo-[acyl-carrier-protein] synthase (115 aa).

Residues aspartate 6 and glutamate 51 each contribute to the Mg(2+) site.

The protein belongs to the P-Pant transferase superfamily. AcpS family. The cofactor is Mg(2+).

Its subcellular location is the cytoplasm. It carries out the reaction apo-[ACP] + CoA = holo-[ACP] + adenosine 3',5'-bisphosphate + H(+). Functionally, transfers the 4'-phosphopantetheine moiety from coenzyme A to a Ser of acyl-carrier-protein. The chain is Holo-[acyl-carrier-protein] synthase from Campylobacter jejuni subsp. jejuni serotype O:6 (strain 81116 / NCTC 11828).